The primary structure comprises 194 residues: Superoxide dismutase [Cu-Zn] (194 aa).

An N-terminal signal peptide occupies residues 1-20 (MTRPLALIIFLVAILTNTDP). His85 and His104 together coordinate Cu cation. Cys96 and Cys188 are disulfide-bonded. His104, His112, His121, and Asp124 together coordinate Zn(2+). A Cu cation-binding site is contributed by His162.

The protein belongs to the Cu-Zn superoxide dismutase family. As to quaternary structure, homodimer. Cu cation serves as cofactor. Requires Zn(2+) as cofactor.

It catalyses the reaction 2 superoxide + 2 H(+) = H2O2 + O2. In terms of biological role, destroys radicals which are normally produced within the cells and which are toxic to biological systems. The sequence is that of Superoxide dismutase [Cu-Zn] from Ramazzottius varieornatus (Water bear).